The sequence spans 80 residues: RNA-binding protein KhpA (80 aa).

Residues 33-80 (LEILQLRVASEDVGKVIGKHGRIARALRTLLSASAHASQTRYALEIID) enclose the KH domain.

Belongs to the KhpA RNA-binding protein family. In terms of assembly, forms a complex with KhpB.

It localises to the cytoplasm. In terms of biological role, a probable RNA chaperone. Forms a complex with KhpB which binds to cellular RNA and controls its expression. Plays a role in peptidoglycan (PG) homeostasis and cell length regulation. This chain is RNA-binding protein KhpA, found in Treponema pallidum (strain Nichols).